The sequence spans 600 residues: Methionine--tRNA ligase (600 aa).

A 'HIGH' region motif is present at residues 11–21; the sequence is PYANGPRHIGH. Positions 143, 146, 156, and 159 each coordinate Zn(2+). Positions 351–355 match the 'KMSKS' region motif; the sequence is KFSSS. Ser-354 contacts ATP.

This sequence belongs to the class-I aminoacyl-tRNA synthetase family. MetG type 1 subfamily. As to quaternary structure, monomer. Zn(2+) is required as a cofactor.

It is found in the cytoplasm. It carries out the reaction tRNA(Met) + L-methionine + ATP = L-methionyl-tRNA(Met) + AMP + diphosphate. Its function is as follows. Is required not only for elongation of protein synthesis but also for the initiation of all mRNA translation through initiator tRNA(fMet) aminoacylation. In Salinispora arenicola (strain CNS-205), this protein is Methionine--tRNA ligase.